A 184-amino-acid polypeptide reads, in one-letter code: UPF0149 protein Pmen_0324 (184 aa).

It belongs to the UPF0149 family.

This chain is UPF0149 protein Pmen_0324, found in Ectopseudomonas mendocina (strain ymp) (Pseudomonas mendocina).